Here is a 111-residue protein sequence, read N- to C-terminus: MNFDMSKLMQQAQKMQEQMKKAQQERENMEVIGESGAGLVSVTMTGKYDVKKVTIDDSLMSEDKEMLEDLIAAAVNSAVKKVEDSSSSADIGKMAKEAGIDLPNGFNFPFK.

The interval 1-27 (MNFDMSKLMQQAQKMQEQMKKAQQERE) is disordered. The span at 17–27 (EQMKKAQQERE) shows a compositional bias: basic and acidic residues.

This sequence belongs to the YbaB/EbfC family. Homodimer.

The protein resides in the cytoplasm. It is found in the nucleoid. Binds to DNA and alters its conformation. May be involved in regulation of gene expression, nucleoid organization and DNA protection. The polypeptide is Nucleoid-associated protein Fphi_0115 (Francisella philomiragia subsp. philomiragia (strain ATCC 25017 / CCUG 19701 / FSC 153 / O#319-036)).